The chain runs to 413 residues: Putative F-box/kelch-repeat protein At4g22430 (413 aa).

Positions 5–54 (NNTITDVLEGIVTEILVRLPLRSISRFKSVSQTWKSAIESVYFRRLFVSL) constitute an F-box domain. The stretch at 168–210 (NMFLNKGEMYMPLYVYSSETGFWIHKEVVCPVRLPNFYDPISL) is one Kelch repeat.

The protein is Putative F-box/kelch-repeat protein At4g22430 of Arabidopsis thaliana (Mouse-ear cress).